The chain runs to 615 residues: ATP-dependent RNA helicase mrh4, mitochondrial (615 aa).

Residues 1 to 37 (MLRPKAGKCLLCSFRAAQKPVSQKWPSRALSMRTRLP) constitute a mitochondrion transit peptide. A disordered region spans residues 21–108 (VSQKWPSRAL…HRDRDDKKDR (88 aa)). Residues 90 to 108 (QERRTSRLDHRDRDDKKDR) are compositionally biased toward basic and acidic residues. Residues 138–171 (QSFEQFALLDSVKQAIFQQALPELKEHVPTPVQR) carry the Q motif motif. One can recognise a Helicase ATP-binding domain in the interval 184-395 (RRPKSEMEQY…RKRFPDINRL (212 aa)). 197 to 204 (AETGSGKT) serves as a coordination point for ATP. Residues 342–345 (DEAD) carry the DEAD box motif. The 172-residue stretch at 444–615 (PVKGLMDVKR…EGMFEGKALI (172 aa)) folds into the Helicase C-terminal domain.

It belongs to the DEAD box helicase family. MRH4 subfamily.

The protein resides in the mitochondrion. The catalysed reaction is ATP + H2O = ADP + phosphate + H(+). Functionally, ATP-binding RNA helicase involved in mitochondrial RNA metabolism. Required for maintenance of mitochondrial DNA. This chain is ATP-dependent RNA helicase mrh4, mitochondrial (mrh4), found in Sclerotinia sclerotiorum (strain ATCC 18683 / 1980 / Ss-1) (White mold).